The chain runs to 229 residues: MGQKVNPIGFRLAVNKDWRSKWYATGQDYATKLHEDLVMRKYIKEQLMSAAVSSIVIERAWNSVRITVHTARPGLVIGRKGEEIEKIRQYLQGLCGASTQVNIDIVEIRSPETDAQLIAENVAVQLERRVSFRRAMKRAVQVAMERGADGIRIRCAGRLGGADIARAEWYREGKVPLQTLRTPIDYGFAEARTLYGIIGVKCWVNKRDEVVSQQNSRPSGPRGPRRPRA.

The region spanning 39–109 (MRKYIKEQLM…QVNIDIVEIR (71 aa)) is the KH type-2 domain. Residues 210–229 (VVSQQNSRPSGPRGPRRPRA) form a disordered region.

Belongs to the universal ribosomal protein uS3 family. In terms of assembly, part of the 30S ribosomal subunit. Forms a tight complex with proteins S10 and S14.

Its function is as follows. Binds the lower part of the 30S subunit head. Binds mRNA in the 70S ribosome, positioning it for translation. The chain is Small ribosomal subunit protein uS3 from Akkermansia muciniphila (strain ATCC BAA-835 / DSM 22959 / JCM 33894 / BCRC 81048 / CCUG 64013 / CIP 107961 / Muc).